The primary structure comprises 275 residues: Ribosomal RNA small subunit methyltransferase A (275 aa).

The S-adenosyl-L-methionine site is built by Asn19, Leu21, Gly46, Glu71, Asp94, and Asn117.

The protein belongs to the class I-like SAM-binding methyltransferase superfamily. rRNA adenine N(6)-methyltransferase family. RsmA subfamily.

Its subcellular location is the cytoplasm. The enzyme catalyses adenosine(1518)/adenosine(1519) in 16S rRNA + 4 S-adenosyl-L-methionine = N(6)-dimethyladenosine(1518)/N(6)-dimethyladenosine(1519) in 16S rRNA + 4 S-adenosyl-L-homocysteine + 4 H(+). Functionally, specifically dimethylates two adjacent adenosines (A1518 and A1519) in the loop of a conserved hairpin near the 3'-end of 16S rRNA in the 30S particle. May play a critical role in biogenesis of 30S subunits. The chain is Ribosomal RNA small subunit methyltransferase A from Burkholderia multivorans (strain ATCC 17616 / 249).